Reading from the N-terminus, the 141-residue chain is MPPKFKRHLNDDDVTGSVKSERRNLLEDDSDEEEDFFLRGPSGPRFGPRNDKIKHVQNQVDEVIDVMQENITKVIERGERLDELQDKSESLSDNATAFSNRSKQLRRQMWWRGCKIKAIMALVAAILLLVIIILIVMKYRT.

Residues 1–51 (MPPKFKRHLNDDDVTGSVKSERRNLLEDDSDEEEDFFLRGPSGPRFGPRND) are disordered. The Cytoplasmic segment spans residues 1-115 (MPPKFKRHLN…RRQMWWRGCK (115 aa)). Residues Ser17 and Ser30 each carry the phosphoserine modification. Residues 52–112 (KIKHVQNQVD…KQLRRQMWWR (61 aa)) form the v-SNARE coiled-coil homology domain. A helical; Anchor for type IV membrane protein transmembrane segment spans residues 116–136 (IKAIMALVAAILLLVIIILIV). Topologically, residues 137–141 (MKYRT) are vesicular.

It belongs to the synaptobrevin family. Identified in a complex containing STX6, STX12, VAMP4 and VTI1A. Interacts with BAIAP3; this interaction is increased in the presence of calcium.

It is found in the golgi apparatus. The protein localises to the trans-Golgi network membrane. Functionally, involved in the pathway that functions to remove an inhibitor (probably synaptotagmin-4) of calcium-triggered exocytosis during the maturation of secretory granules. May be a marker for this sorting pathway that is critical for remodeling the secretory response of granule. The polypeptide is Vesicle-associated membrane protein 4 (VAMP4) (Homo sapiens (Human)).